Consider the following 426-residue polypeptide: Formate-dependent phosphoribosylglycinamide formyltransferase (426 aa).

N(1)-(5-phospho-beta-D-ribosyl)glycinamide-binding positions include 26 to 27 (EL) and glutamate 86. ATP-binding positions include arginine 118, lysine 158, 197 to 200 (EEFI), and glutamate 205. The region spanning 123 to 324 (EAIASTGART…EFALHAKAVL (202 aa)) is the ATP-grasp domain. Glutamate 279 and glutamate 293 together coordinate Mg(2+). N(1)-(5-phospho-beta-D-ribosyl)glycinamide is bound by residues aspartate 300, lysine 374, and 381–382 (RR).

This sequence belongs to the PurK/PurT family. Homodimer.

It carries out the reaction N(1)-(5-phospho-beta-D-ribosyl)glycinamide + formate + ATP = N(2)-formyl-N(1)-(5-phospho-beta-D-ribosyl)glycinamide + ADP + phosphate + H(+). Its pathway is purine metabolism; IMP biosynthesis via de novo pathway; N(2)-formyl-N(1)-(5-phospho-D-ribosyl)glycinamide from N(1)-(5-phospho-D-ribosyl)glycinamide (formate route): step 1/1. Involved in the de novo purine biosynthesis. Catalyzes the transfer of formate to 5-phospho-ribosyl-glycinamide (GAR), producing 5-phospho-ribosyl-N-formylglycinamide (FGAR). Formate is provided by PurU via hydrolysis of 10-formyl-tetrahydrofolate. In Methanocella arvoryzae (strain DSM 22066 / NBRC 105507 / MRE50), this protein is Formate-dependent phosphoribosylglycinamide formyltransferase.